We begin with the raw amino-acid sequence, 315 residues long: Glycine--tRNA ligase alpha subunit (315 aa).

Belongs to the class-II aminoacyl-tRNA synthetase family. In terms of assembly, tetramer of two alpha and two beta subunits.

It localises to the cytoplasm. The catalysed reaction is tRNA(Gly) + glycine + ATP = glycyl-tRNA(Gly) + AMP + diphosphate. The protein is Glycine--tRNA ligase alpha subunit of Pseudomonas entomophila (strain L48).